Reading from the N-terminus, the 439-residue chain is Skin secretory protein xP2 (439 aa).

Residues 1 to 22 (MNHKLFCVHFLLLILSVCYIQG) form the signal peptide. A disordered region spans residues 25–351 (AGGEPAPAEG…VEVGPKTEDC (327 aa)). Tandem repeats lie at residues 26–33 (GGEPAPAE), 34–41 (GVAPAPAE), 42–51 (GGAPAPAPAE), 52–59 (GEAPAPAE), and 60–69 (GGAPAPAPAE). The tract at residues 26-343 (GGEPAPAEGV…APAPAPAPVE (318 aa)) is 33 X approximate repeats of G-G(0,1)-[EV](0,1)-A-P-[A-P](1,3)-A-E. Residues 26–345 (GGEPAPAEGV…APAPAPVEVG (320 aa)) are compositionally biased toward low complexity. The 6; approximate repeat unit spans residues 70–77 (GAEPAPAD). 9 consecutive repeat copies span residues 78-87 (GGAPAPAPAE), 88-97 (GGAPAPAPAE), 98-107 (GGAPAPAPAE), 108-115 (GGAPAPAE), 116-125 (GGAPAPAPAE), 126-135 (GEAPAPAPAE), 136-145 (GEAPAPAPAE), 146-153 (GEAPAPAE), and 154-163 (GEAPAPAPAE). A 16; approximate repeat occupies 164–173 (VEAPAPAPAE). Tandem repeats lie at residues 174-183 (GEAPAPAPAE), 184-193 (GEAPAPAPAE), 194-203 (GEAPAPAPAE), 204-215 (GEAPAPAPAPAE), 216-225 (GEAPAPAPAE), 226-235 (GEAPAPAPAE), 236-245 (GEAPAPAPAE), 246-255 (GEAPAPAPAE), 256-265 (GEAPAPAPAE), 266-275 (GEAPAPAPAE), 276-285 (GEAPAPAPAE), 286-293 (GEAPAPAE), 294-303 (GEAPAPAPAE), and 304-313 (GEAPAPAPAE). A 31; approximate repeat occupies 314–321 (GGAPSPAE). A 32; approximate repeat occupies 322–331 (GGAPAAAPAE). The 33; approximate repeat unit spans residues 332 to 343 (GGAPAPAPAPVE). P-type domains follow at residues 349–392 (EDCK…FFPR) and 396–439 (AQCL…FHQK). 6 cysteine pairs are disulfide-bonded: Cys-351–Cys-377, Cys-361–Cys-376, Cys-371–Cys-388, Cys-398–Cys-424, Cys-408–Cys-423, and Cys-418–Cys-435.

As to expression, skin.

The protein resides in the secreted. In terms of biological role, may act as a growth factor in the germinal layer of the epidermis. May also be involved in growth of regenerating glands and in protection of the skin from the external environment. The protein is Skin secretory protein xP2 (p2) of Xenopus laevis (African clawed frog).